A 369-amino-acid polypeptide reads, in one-letter code: 3-dehydroquinate synthase (369 aa).

Residues 75–80 (DGEEHK), 109–113 (GVIGD), 133–134 (TT), K146, K155, and 173–176 (TLKT) each bind NAD(+). Zn(2+) contacts are provided by E188, H251, and H268.

It belongs to the sugar phosphate cyclases superfamily. Dehydroquinate synthase family. Co(2+) serves as cofactor. Zn(2+) is required as a cofactor. Requires NAD(+) as cofactor.

It localises to the cytoplasm. The enzyme catalyses 7-phospho-2-dehydro-3-deoxy-D-arabino-heptonate = 3-dehydroquinate + phosphate. Its pathway is metabolic intermediate biosynthesis; chorismate biosynthesis; chorismate from D-erythrose 4-phosphate and phosphoenolpyruvate: step 2/7. Its function is as follows. Catalyzes the conversion of 3-deoxy-D-arabino-heptulosonate 7-phosphate (DAHP) to dehydroquinate (DHQ). The protein is 3-dehydroquinate synthase of Legionella pneumophila subsp. pneumophila (strain Philadelphia 1 / ATCC 33152 / DSM 7513).